We begin with the raw amino-acid sequence, 705 residues long: Elongation factor G (705 aa).

A tr-type G domain is found at 8 to 294; it reads DRYRNFGIMA…AVIDYLPSPL (287 aa). Residues 17-24, 92-96, and 146-149 contribute to the GTP site; these read AHIDAGKT, DTPGH, and NKMD.

The protein belongs to the TRAFAC class translation factor GTPase superfamily. Classic translation factor GTPase family. EF-G/EF-2 subfamily.

It localises to the cytoplasm. In terms of biological role, catalyzes the GTP-dependent ribosomal translocation step during translation elongation. During this step, the ribosome changes from the pre-translocational (PRE) to the post-translocational (POST) state as the newly formed A-site-bound peptidyl-tRNA and P-site-bound deacylated tRNA move to the P and E sites, respectively. Catalyzes the coordinated movement of the two tRNA molecules, the mRNA and conformational changes in the ribosome. In Dinoroseobacter shibae (strain DSM 16493 / NCIMB 14021 / DFL 12), this protein is Elongation factor G.